A 65-amino-acid chain; its full sequence is Large ribosomal subunit protein bL35 (65 aa).

The tract at residues 1-26 (MPKMKTHRGAAKRFRKTGTGKLKRGK) is disordered.

It belongs to the bacterial ribosomal protein bL35 family.

This Clostridium beijerinckii (strain ATCC 51743 / NCIMB 8052) (Clostridium acetobutylicum) protein is Large ribosomal subunit protein bL35.